The sequence spans 495 residues: Cytochrome P450 monooxygenase aneF (495 aa).

A helical membrane pass occupies residues 1–21; it reads MIAGLVLVVLLTKYLQRVFLH. Asn-47 carries an N-linked (GlcNAc...) asparagine glycan. Cys-437 is a heme binding site.

It belongs to the cytochrome P450 family. Heme serves as cofactor.

The protein resides in the membrane. It carries out the reaction dauca-4,7-diene + 3 reduced [NADPH--hemoprotein reductase] + 3 O2 = asperaculane D + 3 oxidized [NADPH--hemoprotein reductase] + 4 H2O + 4 H(+). It participates in secondary metabolite biosynthesis. Functionally, cytochrome P450 monooxygenase; part of the gene cluster that mediates the biosynthesis of aculenes, a unique type of norsesquiterpenes that contain a nordaucane skeleton linked to an L-proline moiety and are of mixed biosynthetic origin. The pathway begins with the synthesis of dauca-4,7-diene by the terpene cyclase aneC using farnesyl pyrophosphate (FPP) as substrate. The cytochrome P450 monooxygenase aneF then performs the initial oxidation at C-12 of dauca-4,7-diene to yield asperaculane D. Asperaculane D is substrate of the cytochrome P450 monooxygenase aneD for C-10 hydroxylation to yield asperaculane E. The cytochrome P450 monooxygenase aneG then converts asperaculane E into aculene D via C-2 oxidation. The monomodular nonribosomal peptide synthtase aneB adenylates L-proline and the thiohydrolase aneE transfers this activated L-proline derivative to aculenes D and C to produce respectively aculenes B and A. The dioxygenase aneA converts aculene D into aculene C, and aculene B into aculene A by introducing the 5,6-alkene moiety. Asperculanes A, B, C and F, as well as 14-prolyl asperculane C, might be shunt products of the pathway. The polypeptide is Cytochrome P450 monooxygenase aneF (Aspergillus aculeatus (strain ATCC 16872 / CBS 172.66 / WB 5094)).